A 502-amino-acid chain; its full sequence is Aspartyl/glutamyl-tRNA(Asn/Gln) amidotransferase subunit B (502 aa).

The protein belongs to the GatB/GatE family. GatB subfamily. In terms of assembly, heterotrimer of A, B and C subunits.

The enzyme catalyses L-glutamyl-tRNA(Gln) + L-glutamine + ATP + H2O = L-glutaminyl-tRNA(Gln) + L-glutamate + ADP + phosphate + H(+). The catalysed reaction is L-aspartyl-tRNA(Asn) + L-glutamine + ATP + H2O = L-asparaginyl-tRNA(Asn) + L-glutamate + ADP + phosphate + 2 H(+). Its function is as follows. Allows the formation of correctly charged Asn-tRNA(Asn) or Gln-tRNA(Gln) through the transamidation of misacylated Asp-tRNA(Asn) or Glu-tRNA(Gln) in organisms which lack either or both of asparaginyl-tRNA or glutaminyl-tRNA synthetases. The reaction takes place in the presence of glutamine and ATP through an activated phospho-Asp-tRNA(Asn) or phospho-Glu-tRNA(Gln). The sequence is that of Aspartyl/glutamyl-tRNA(Asn/Gln) amidotransferase subunit B from Arthrobacter sp. (strain FB24).